The following is a 246-amino-acid chain: Ribonuclease PH (246 aa).

Phosphate is bound by residues arginine 91 and glycine 129 to arginine 131.

This sequence belongs to the RNase PH family. Homohexameric ring arranged as a trimer of dimers.

The catalysed reaction is tRNA(n+1) + phosphate = tRNA(n) + a ribonucleoside 5'-diphosphate. Functionally, phosphorolytic 3'-5' exoribonuclease that plays an important role in tRNA 3'-end maturation. Removes nucleotide residues following the 3'-CCA terminus of tRNAs; can also add nucleotides to the ends of RNA molecules by using nucleoside diphosphates as substrates, but this may not be physiologically important. Probably plays a role in initiation of 16S rRNA degradation (leading to ribosome degradation) during starvation. The sequence is that of Ribonuclease PH from Burkholderia cenocepacia (strain ATCC BAA-245 / DSM 16553 / LMG 16656 / NCTC 13227 / J2315 / CF5610) (Burkholderia cepacia (strain J2315)).